Consider the following 454-residue polypeptide: Asparagine--tRNA ligase (454 aa).

Belongs to the class-II aminoacyl-tRNA synthetase family. Homodimer.

Its subcellular location is the cytoplasm. It catalyses the reaction tRNA(Asn) + L-asparagine + ATP = L-asparaginyl-tRNA(Asn) + AMP + diphosphate + H(+). The protein is Asparagine--tRNA ligase of Mycoplasma capricolum subsp. capricolum (strain California kid / ATCC 27343 / NCTC 10154).